We begin with the raw amino-acid sequence, 1356 residues long: RHO1 GDP-GTP exchange protein 2 (1356 aa).

Ser-2 carries the post-translational modification N-acetylserine. 2 disordered regions span residues Arg-74–Gly-94 and Glu-109–Glu-175. Ser-76 is modified (phosphoserine). 2 stretches are compositionally biased toward polar residues: residues Glu-109–Ser-125 and His-147–Arg-157. Ser-193 is modified (phosphoserine). 5 disordered regions span residues Leu-202–Ser-291, Ser-303–Asn-362, Ser-383–Ala-409, Gly-531–Lys-571, and Asn-626–Val-645. Residues Lys-204–Arg-221 show a composition bias toward polar residues. Ser-223 is modified (phosphoserine). The span at Ser-235–Gln-244 shows a compositional bias: basic and acidic residues. Residues Gln-250–Asn-265 are compositionally biased toward low complexity. The span at Val-271–His-281 shows a compositional bias: polar residues. The span at Ser-282–Ser-291 shows a compositional bias: low complexity. Residues Ser-303–Phe-325 are compositionally biased toward polar residues. The span at His-329–Ser-338 shows a compositional bias: basic residues. 2 stretches are compositionally biased toward low complexity: residues Asn-339 to Asn-362 and Ser-383 to Ser-401. 2 positions are modified to phosphoserine: Ser-566 and Ser-628. A DH domain is found at Lys-659–Ala-846. In terms of domain architecture, CNH spans Thr-1034–Ile-1336.

Stimulates the exchange of RHO1 GDP-bound form into GTP-bound form. The polypeptide is RHO1 GDP-GTP exchange protein 2 (ROM2) (Saccharomyces cerevisiae (strain ATCC 204508 / S288c) (Baker's yeast)).